A 101-amino-acid chain; its full sequence is Small ribosomal subunit protein uS14 (101 aa).

It belongs to the universal ribosomal protein uS14 family. In terms of assembly, part of the 30S ribosomal subunit. Contacts proteins S3 and S10.

Its function is as follows. Binds 16S rRNA, required for the assembly of 30S particles and may also be responsible for determining the conformation of the 16S rRNA at the A site. The protein is Small ribosomal subunit protein uS14 of Burkholderia multivorans (strain ATCC 17616 / 249).